The chain runs to 483 residues: tRNA sulfurtransferase (483 aa).

One can recognise a THUMP domain in the interval 63–167 (GQLIDMLART…DDQVYLVTKK (105 aa)). ATP contacts are provided by residues 185–186 (LI), Lys-267, Gly-289, and Gln-298. The cysteines at positions 346 and 457 are disulfide-linked. The Rhodanese domain occupies 405-483 (LPVSAKVIDI…GYTNVGVYRP (79 aa)). The Cysteine persulfide intermediate role is filled by Cys-457.

The protein belongs to the ThiI family.

It localises to the cytoplasm. The catalysed reaction is [ThiI sulfur-carrier protein]-S-sulfanyl-L-cysteine + a uridine in tRNA + 2 reduced [2Fe-2S]-[ferredoxin] + ATP + H(+) = [ThiI sulfur-carrier protein]-L-cysteine + a 4-thiouridine in tRNA + 2 oxidized [2Fe-2S]-[ferredoxin] + AMP + diphosphate. It catalyses the reaction [ThiS sulfur-carrier protein]-C-terminal Gly-Gly-AMP + S-sulfanyl-L-cysteinyl-[cysteine desulfurase] + AH2 = [ThiS sulfur-carrier protein]-C-terminal-Gly-aminoethanethioate + L-cysteinyl-[cysteine desulfurase] + A + AMP + 2 H(+). It participates in cofactor biosynthesis; thiamine diphosphate biosynthesis. In terms of biological role, catalyzes the ATP-dependent transfer of a sulfur to tRNA to produce 4-thiouridine in position 8 of tRNAs, which functions as a near-UV photosensor. Also catalyzes the transfer of sulfur to the sulfur carrier protein ThiS, forming ThiS-thiocarboxylate. This is a step in the synthesis of thiazole, in the thiamine biosynthesis pathway. The sulfur is donated as persulfide by IscS. The chain is tRNA sulfurtransferase from Saccharophagus degradans (strain 2-40 / ATCC 43961 / DSM 17024).